Consider the following 367-residue polypeptide: MSLADSVLAVNNDLPIRTDSPVHSGKVRSVYWLTDADSRRLIQTKGYNVPEDTPLAIMVISDRISAFDCIFHGEGGLKGIPGKGAALNAISNHWFKLFAENGLADSHILDIPHPFVWIVQKARPIKVEAICRQYITGSMWRAYSKGERVFCGITLPEGLEKDQKLPDLLITPSTKGILTGIPGVPAQDDVNISRSDIEANYQAFGFEKVEDIDLYEKLLKDGFKVIAKALADLDQVFVDTKFEFGYVTDKNGNSKLIYMDEVGTPDSSRIWDGAAYRDGKILENSKEGFRQFLLNHFPDPDILLNKDRMPEREALARDNALPLEAMMDVSRTYTGIAEKVTGAAIPLPANPKADIIKILREEYDLIV.

Belongs to the SAICAR synthetase family.

It catalyses the reaction 5-amino-1-(5-phospho-D-ribosyl)imidazole-4-carboxylate + L-aspartate + ATP = (2S)-2-[5-amino-1-(5-phospho-beta-D-ribosyl)imidazole-4-carboxamido]succinate + ADP + phosphate + 2 H(+). The protein operates within purine metabolism; IMP biosynthesis via de novo pathway; 5-amino-1-(5-phospho-D-ribosyl)imidazole-4-carboxamide from 5-amino-1-(5-phospho-D-ribosyl)imidazole-4-carboxylate: step 1/2. The protein is Phosphoribosylaminoimidazole-succinocarboxamide synthase of Shewanella sp. (strain MR-7).